Here is a 267-residue protein sequence, read N- to C-terminus: Taurine import ATP-binding protein TauB (267 aa).

Residues 6 to 238 (FNEASLIYPA…DILAGAPASE (233 aa)) enclose the ABC transporter domain. 43–50 (GRSGSGKT) is an ATP binding site.

Belongs to the ABC transporter superfamily. Taurine importer (TC 3.A.1.17.1) family. In terms of assembly, the complex is composed of two ATP-binding proteins (TauB), two transmembrane proteins (TauC) and a solute-binding protein (TauA).

Its subcellular location is the cell inner membrane. It carries out the reaction taurine(out) + ATP + H2O = taurine(in) + ADP + phosphate + H(+). Its function is as follows. Part of the ABC transporter complex TauABC involved in taurine import. Responsible for energy coupling to the transport system. This Sinorhizobium fredii (strain NBRC 101917 / NGR234) protein is Taurine import ATP-binding protein TauB.